A 254-amino-acid chain; its full sequence is Gamma-glutamyl-gamma-aminobutyrate hydrolase PuuD (254 aa).

A Glutamine amidotransferase type-1 domain is found at 16–250 (RNRLKGHATQ…ITACQHHIAE (235 aa)). The active-site Nucleophile is the Cys114. Residues His222 and Glu224 contribute to the active site.

Belongs to the peptidase C26 family. Homodimer.

It catalyses the reaction 4-(gamma-L-glutamylamino)butanoate + H2O = 4-aminobutanoate + L-glutamate. The protein operates within amine and polyamine degradation; putrescine degradation; 4-aminobutanoate from putrescine: step 4/4. In terms of biological role, involved in the breakdown of putrescine via hydrolysis of the gamma-glutamyl linkage of gamma-glutamyl-gamma-aminobutyrate. The polypeptide is Gamma-glutamyl-gamma-aminobutyrate hydrolase PuuD (puuD) (Escherichia coli (strain K12)).